The primary structure comprises 469 residues: Glutamine synthetase (469 aa).

Residues 12–97 (HDVKWVDLRF…LVCDIIEPST (86 aa)) form the GS beta-grasp domain. Residues 105–469 (PRNIAKRAEE…PLEYDLYYSV (365 aa)) enclose the GS catalytic domain. Mg(2+)-binding residues include Glu130 and Glu132. Glu208 is a binding site for ATP. Mg(2+) is bound by residues Glu213 and Glu221. Residues 265-266 (NG) and Gly266 contribute to the L-glutamate site. His270 lines the Mg(2+) pocket. ATP-binding positions include 272–274 (HMS) and Ser274. Arg322, Glu328, and Arg340 together coordinate L-glutamate. ATP-binding residues include Arg340, Arg345, and Lys353. Glu358 provides a ligand contact to Mg(2+). Arg360 is an L-glutamate binding site. Tyr398 is subject to O-AMP-tyrosine.

It belongs to the glutamine synthetase family. Oligomer of 12 subunits arranged in the form of two hexameric ring. Mg(2+) serves as cofactor.

The protein resides in the cytoplasm. The enzyme catalyses L-glutamate + NH4(+) + ATP = L-glutamine + ADP + phosphate + H(+). The activity of this enzyme could be controlled by adenylation under conditions of abundant glutamine. In terms of biological role, catalyzes the ATP-dependent biosynthesis of glutamine from glutamate and ammonia. The chain is Glutamine synthetase from Pseudomonas aeruginosa (strain ATCC 15692 / DSM 22644 / CIP 104116 / JCM 14847 / LMG 12228 / 1C / PRS 101 / PAO1).